We begin with the raw amino-acid sequence, 244 residues long: Gasdermin-like protein rcd-1-2 (244 aa).

The interval 1–22 (MDNEEWFPLKQTHYPPPTIPSM) is disordered.

This sequence belongs to the gasdermin family. Heterooligomer; the heterooligomer with rcd-1-1 forms a ring-shaped pore complex when inserted in the membrane.

It is found in the cytoplasm. The protein localises to the cell membrane. Its function is as follows. Gasdermin-like protein involved in heterokaryon incompatibility, a process that ensures that during spontaneous vegetative cell fusion, only compatible cells from the same colony survive (non-self-recognition). In N.crassa, the rcd-1 locus exists as 2 incompatible alleles, rcd-1-1 (AC Q7SBA0) and rcd-1-2 (this entry). During the allorecognition process, forms a heterooligomer with rcd-1-1, thereby forming a functional gasdermin-like complex that binds to membranes and forms pores, triggering cell death. Binds negatively charged phospholipids, such as cardiolipin and phosphatidylserine. Also binds to phosphoinositides, preferentially to phosphatidylinositol-3-phosphate (PtdIns-3-P), PtdIns-5-P and PtdIns-3,5-P2. This Neurospora crassa protein is Gasdermin-like protein rcd-1-2.